A 612-amino-acid polypeptide reads, in one-letter code: Protein cereblon (612 aa).

Residues 1–11 show a composition bias toward acidic residues; sequence MDDEETAEIED. 3 disordered regions span residues 1–30, 58–133, and 181–211; these read MDDE…GASA, MELI…NPHP, and QERR…PYDV. The span at 69–81 shows a compositional bias: low complexity; the sequence is AADAPDAAASTGS. Residues 181–190 show a composition bias toward basic and acidic residues; that stretch reads QERRRSRTSE. Residues 250-478 form the Lon N-terminal domain; sequence HMLIFLHQHI…IIGSTLKDES (229 aa). The region spanning 477-586 is the CULT domain; the sequence is ESVFYCRYCN…LAGSSVRIGK (110 aa). Zn(2+) contacts are provided by Cys-482, Cys-485, Cys-551, and Cys-554.

Belongs to the CRBN family. Likely a component of a DCX (DDB1-CUL4-X-box) protein ligase complex. May interact with pic/DDB1. In terms of processing, ubiquitinated.

Its subcellular location is the nucleus. It functions in the pathway protein modification; protein ubiquitination. Substrate recognition component of a DCX (DDB1-CUL4-X-box) E3 protein ligase complex that mediates the ubiquitination and subsequent proteasomal degradation of target proteins. Has an essential role in mediating growth by negatively regulating insulin signaling. It also has a role in maintaining presynaptic function in the neuromuscular junction synapses of third-instar larvae. This chain is Protein cereblon, found in Drosophila willistoni (Fruit fly).